Consider the following 938-residue polypeptide: AP-2 complex subunit alpha-2 (938 aa).

Residues 11–12 (RG), Lys-43, Tyr-53, and 57–61 (KYVCK) contribute to the a 1,2-diacyl-sn-glycero-3-phospho-(1D-myo-inositol-3,4,5-trisphosphate) site. The tract at residues 616–677 (LKKKKGPSTV…APPVPAGPPP (62 aa)) is disordered. Over residues 645–668 (PALASTSAVSTPSPSADLLGLGAA) the composition is skewed to low complexity.

Belongs to the adaptor complexes large subunit family. In terms of assembly, adaptor protein complex 2 (AP-2) is a heterotetramer composed of two large adaptins (alpha-type subunit AP2A1 or AP2A2 and beta-type subunit AP2B1), a medium adaptin (mu-type subunit AP2M1) and a small adaptin (sigma-type subunit AP2S1). Binds clathrin. Binds EPN1, EPS15, AMPH, SNAP91 and BIN1. Interacts with HIP1. Interacts with DGKD. Interacts with DENND1A, DENND1B and DENND1C. Interacts with FCHO1. Interacts with ATAT1; this interaction is required for efficient alpha-tubulin acetylation by ATAT1. Interacts with KIAA1107. Together with AP2B1 and AP2M1, it interacts with ADAM10; this interaction facilitates ADAM10 endocytosis from the plasma membrane during long-term potentiation in hippocampal neurons. Interacts with CLN3 (via dileucine motif). Interacts with ABCB11; this interaction regulates cell membrane expression of ABCB11 through its internalization in a clathrin-dependent manner and its subsequent degradation. Interacts with DNAJC6.

Its subcellular location is the cell membrane. It localises to the membrane. It is found in the coated pit. Its function is as follows. Component of the adaptor protein complex 2 (AP-2). Adaptor protein complexes function in protein transport via transport vesicles in different membrane traffic pathways. Adaptor protein complexes are vesicle coat components and appear to be involved in cargo selection and vesicle formation. AP-2 is involved in clathrin-dependent endocytosis in which cargo proteins are incorporated into vesicles surrounded by clathrin (clathrin-coated vesicles, CCVs) which are destined for fusion with the early endosome. The clathrin lattice serves as a mechanical scaffold but is itself unable to bind directly to membrane components. Clathrin-associated adaptor protein (AP) complexes which can bind directly to both the clathrin lattice and to the lipid and protein components of membranes are considered to be the major clathrin adaptors contributing the CCV formation. AP-2 also serves as a cargo receptor to selectively sort the membrane proteins involved in receptor-mediated endocytosis. AP-2 seems to play a role in the recycling of synaptic vesicle membranes from the presynaptic surface. AP-2 recognizes Y-X-X-[FILMV] (Y-X-X-Phi) and [ED]-X-X-X-L-[LI] endocytosis signal motifs within the cytosolic tails of transmembrane cargo molecules. AP-2 may also play a role in maintaining normal post-endocytic trafficking through the ARF6-regulated, non-clathrin pathway. During long-term potentiation in hippocampal neurons, AP-2 is responsible for the endocytosis of ADAM10. The AP-2 alpha subunit binds polyphosphoinositide-containing lipids, positioning AP-2 on the membrane. The AP-2 alpha subunit acts via its C-terminal appendage domain as a scaffolding platform for endocytic accessory proteins. The AP-2 alpha and AP-2 sigma subunits are thought to contribute to the recognition of the [ED]-X-X-X-L-[LI] motif. The protein is AP-2 complex subunit alpha-2 of Bos taurus (Bovine).